The sequence spans 470 residues: Glutamate--tRNA ligase (470 aa).

Residues 9–19 (PSPTGFLHVGG) carry the 'HIGH' region motif. Residues 236–240 (RLSKR) carry the 'KMSKS' region motif. K239 is a binding site for ATP.

It belongs to the class-I aminoacyl-tRNA synthetase family. Glutamate--tRNA ligase type 1 subfamily. In terms of assembly, monomer.

It is found in the cytoplasm. The catalysed reaction is tRNA(Glu) + L-glutamate + ATP = L-glutamyl-tRNA(Glu) + AMP + diphosphate. In terms of biological role, catalyzes the attachment of glutamate to tRNA(Glu) in a two-step reaction: glutamate is first activated by ATP to form Glu-AMP and then transferred to the acceptor end of tRNA(Glu). The polypeptide is Glutamate--tRNA ligase (Legionella pneumophila (strain Lens)).